Consider the following 595-residue polypeptide: Proline--tRNA ligase (595 aa).

It belongs to the class-II aminoacyl-tRNA synthetase family. ProS type 1 subfamily. Homodimer.

Its subcellular location is the cytoplasm. It carries out the reaction tRNA(Pro) + L-proline + ATP = L-prolyl-tRNA(Pro) + AMP + diphosphate. Its function is as follows. Catalyzes the attachment of proline to tRNA(Pro) in a two-step reaction: proline is first activated by ATP to form Pro-AMP and then transferred to the acceptor end of tRNA(Pro). As ProRS can inadvertently accommodate and process non-cognate amino acids such as alanine and cysteine, to avoid such errors it has two additional distinct editing activities against alanine. One activity is designated as 'pretransfer' editing and involves the tRNA(Pro)-independent hydrolysis of activated Ala-AMP. The other activity is designated 'posttransfer' editing and involves deacylation of mischarged Ala-tRNA(Pro). The misacylated Cys-tRNA(Pro) is not edited by ProRS. The protein is Proline--tRNA ligase of Treponema denticola (strain ATCC 35405 / DSM 14222 / CIP 103919 / JCM 8153 / KCTC 15104).